Reading from the N-terminus, the 156-residue chain is Large ribosomal subunit protein eL24 (156 aa).

Basic and acidic residues predominate over residues 110 to 123 (RAAKEKQKQKELEK). The tract at residues 110 to 156 (RAAKEKQKQKELEKKAKKVEKKKPTLAPKQKAAKITQKPAPRVGGKR) is disordered.

Belongs to the eukaryotic ribosomal protein eL24 family.

The chain is Large ribosomal subunit protein eL24 (RPL24) from Schistosoma japonicum (Blood fluke).